Here is a 182-residue protein sequence, read N- to C-terminus: Hypoxanthine/guanine phosphoribosyltransferase (182 aa).

The protein belongs to the purine/pyrimidine phosphoribosyltransferase family. Archaeal HPRT subfamily. As to quaternary structure, homodimer.

It localises to the cytoplasm. It carries out the reaction IMP + diphosphate = hypoxanthine + 5-phospho-alpha-D-ribose 1-diphosphate. The catalysed reaction is GMP + diphosphate = guanine + 5-phospho-alpha-D-ribose 1-diphosphate. The protein operates within purine metabolism; IMP biosynthesis via salvage pathway; IMP from hypoxanthine: step 1/1. Catalyzes a salvage reaction resulting in the formation of IMP that is energically less costly than de novo synthesis. In Methanosphaerula palustris (strain ATCC BAA-1556 / DSM 19958 / E1-9c), this protein is Hypoxanthine/guanine phosphoribosyltransferase.